The sequence spans 285 residues: Polyamine aminopropyltransferase (285 aa).

The PABS domain occupies Asp-5–Lys-241. Gln-35 contributes to the S-methyl-5'-thioadenosine binding site. Residues His-66 and Asp-90 each coordinate spermidine. S-methyl-5'-thioadenosine contacts are provided by residues Asp-110 and Asp-141 to Gly-142. Asp-160 (proton acceptor) is an active-site residue. Residue Asp-160–Asp-163 coordinates spermidine. Pro-167 lines the S-methyl-5'-thioadenosine pocket.

Belongs to the spermidine/spermine synthase family. Homodimer or homotetramer.

The protein localises to the cytoplasm. It carries out the reaction S-adenosyl 3-(methylsulfanyl)propylamine + putrescine = S-methyl-5'-thioadenosine + spermidine + H(+). It functions in the pathway amine and polyamine biosynthesis; spermidine biosynthesis; spermidine from putrescine: step 1/1. Its function is as follows. Catalyzes the irreversible transfer of a propylamine group from the amino donor S-adenosylmethioninamine (decarboxy-AdoMet) to putrescine (1,4-diaminobutane) to yield spermidine. The polypeptide is Polyamine aminopropyltransferase (Xylella fastidiosa (strain 9a5c)).